The chain runs to 345 residues: UDP-3-O-acylglucosamine N-acyltransferase (345 aa).

Catalysis depends on H252, which acts as the Proton acceptor.

This sequence belongs to the transferase hexapeptide repeat family. LpxD subfamily. In terms of assembly, homotrimer.

The enzyme catalyses a UDP-3-O-[(3R)-3-hydroxyacyl]-alpha-D-glucosamine + a (3R)-hydroxyacyl-[ACP] = a UDP-2-N,3-O-bis[(3R)-3-hydroxyacyl]-alpha-D-glucosamine + holo-[ACP] + H(+). Its pathway is bacterial outer membrane biogenesis; LPS lipid A biosynthesis. Catalyzes the N-acylation of UDP-3-O-acylglucosamine using 3-hydroxyacyl-ACP as the acyl donor. Is involved in the biosynthesis of lipid A, a phosphorylated glycolipid that anchors the lipopolysaccharide to the outer membrane of the cell. The protein is UDP-3-O-acylglucosamine N-acyltransferase of Rickettsia rickettsii.